Reading from the N-terminus, the 1590-residue chain is Pentafunctional AROM polypeptide (1590 aa).

A 3-dehydroquinate synthase region spans residues 1–387; it reads MGSTTFENPT…YEPKASVVED (387 aa). NAD(+)-binding positions include 49–51, 86–89, 117–119, and D122; these read DTN, ENSK, and GGV. R133 contacts 7-phospho-2-dehydro-3-deoxy-D-arabino-heptonate. 142–143 provides a ligand contact to NAD(+); the sequence is TT. The 7-phospho-2-dehydro-3-deoxy-D-arabino-heptonate site is built by D149 and K155. K164 contributes to the NAD(+) binding site. Position 165 (N165) interacts with 7-phospho-2-dehydro-3-deoxy-D-arabino-heptonate. Residues 182–185 and N193 each bind NAD(+); that span reads FLET. E197 provides a ligand contact to Zn(2+). Residues 197–200 and K253 contribute to the 7-phospho-2-dehydro-3-deoxy-D-arabino-heptonate site; that span reads EVVK. Residue E263 is the Proton acceptor; for 3-dehydroquinate synthase activity of the active site. 7-phospho-2-dehydro-3-deoxy-D-arabino-heptonate contacts are provided by residues 267–271 and H274; that span reads RNILN. H274 contributes to the Zn(2+) binding site. The Proton acceptor; for 3-dehydroquinate synthase activity role is filled by H278. 7-phospho-2-dehydro-3-deoxy-D-arabino-heptonate is bound by residues H290 and K359. H290 provides a ligand contact to Zn(2+). The tract at residues 400–841 is EPSP synthase; the sequence is VRPSVPETLN…WDILSKSFQV (442 aa). The active-site For EPSP synthase activity is the C823. Residues 863–1055 are shikimate kinase; the sequence is DKSIFIIGMR…RNKPQSFFVS (193 aa). An ATP-binding site is contributed by 870–877; the sequence is GMRGAGKT. The tract at residues 1056–1276 is 3-dehydroquinase; it reads LTMPDISGAA…AAPGQLSAAE (221 aa). H1179 acts as the Proton acceptor; for 3-dehydroquinate dehydratase activity in catalysis. K1207 functions as the Schiff-base intermediate with substrate; for 3-dehydroquinate dehydratase activity in the catalytic mechanism. The shikimate dehydrogenase stretch occupies residues 1289-1590; that stretch reads PKSFYLFGTP…KMDKHPTFVC (302 aa).

In the N-terminal section; belongs to the sugar phosphate cyclases superfamily. Dehydroquinate synthase family. The protein in the 2nd section; belongs to the EPSP synthase family. It in the 3rd section; belongs to the shikimate kinase family. This sequence in the 4th section; belongs to the type-I 3-dehydroquinase family. In the C-terminal section; belongs to the shikimate dehydrogenase family. Homodimer. The cofactor is Zn(2+).

The protein localises to the cytoplasm. It carries out the reaction 7-phospho-2-dehydro-3-deoxy-D-arabino-heptonate = 3-dehydroquinate + phosphate. The catalysed reaction is 3-dehydroquinate = 3-dehydroshikimate + H2O. The enzyme catalyses shikimate + NADP(+) = 3-dehydroshikimate + NADPH + H(+). It catalyses the reaction shikimate + ATP = 3-phosphoshikimate + ADP + H(+). It carries out the reaction 3-phosphoshikimate + phosphoenolpyruvate = 5-O-(1-carboxyvinyl)-3-phosphoshikimate + phosphate. Its pathway is metabolic intermediate biosynthesis; chorismate biosynthesis; chorismate from D-erythrose 4-phosphate and phosphoenolpyruvate: step 2/7. It participates in metabolic intermediate biosynthesis; chorismate biosynthesis; chorismate from D-erythrose 4-phosphate and phosphoenolpyruvate: step 3/7. The protein operates within metabolic intermediate biosynthesis; chorismate biosynthesis; chorismate from D-erythrose 4-phosphate and phosphoenolpyruvate: step 4/7. It functions in the pathway metabolic intermediate biosynthesis; chorismate biosynthesis; chorismate from D-erythrose 4-phosphate and phosphoenolpyruvate: step 5/7. Its pathway is metabolic intermediate biosynthesis; chorismate biosynthesis; chorismate from D-erythrose 4-phosphate and phosphoenolpyruvate: step 6/7. In terms of biological role, the AROM polypeptide catalyzes 5 consecutive enzymatic reactions in prechorismate polyaromatic amino acid biosynthesis. This is Pentafunctional AROM polypeptide from Sclerotinia sclerotiorum (White mold).